The primary structure comprises 728 residues: Catalase-peroxidase 1 (728 aa).

Positions 91–218 (WHSAGTYRTA…LAAVQMGLIY (128 aa)) form a cross-link, tryptophyl-tyrosyl-methioninium (Trp-Tyr) (with M-244). His92 functions as the Proton acceptor in the catalytic mechanism. Residues 218–244 (YVNPEGPDGNPDPVAAAHDIRETFARM) constitute a cross-link (tryptophyl-tyrosyl-methioninium (Tyr-Met) (with W-91)). His259 contacts heme b.

The protein belongs to the peroxidase family. Peroxidase/catalase subfamily. As to quaternary structure, homodimer or homotetramer. Heme b serves as cofactor. Post-translationally, formation of the three residue Trp-Tyr-Met cross-link is important for the catalase, but not the peroxidase activity of the enzyme.

It carries out the reaction H2O2 + AH2 = A + 2 H2O. It catalyses the reaction 2 H2O2 = O2 + 2 H2O. Bifunctional enzyme with both catalase and broad-spectrum peroxidase activity. The protein is Catalase-peroxidase 1 of Burkholderia orbicola (strain MC0-3).